The following is a 122-amino-acid chain: Ribosome-binding factor A (122 aa).

The protein belongs to the RbfA family. Monomer. Binds 30S ribosomal subunits, but not 50S ribosomal subunits or 70S ribosomes.

The protein localises to the cytoplasm. In terms of biological role, one of several proteins that assist in the late maturation steps of the functional core of the 30S ribosomal subunit. Associates with free 30S ribosomal subunits (but not with 30S subunits that are part of 70S ribosomes or polysomes). Required for efficient processing of 16S rRNA. May interact with the 5'-terminal helix region of 16S rRNA. The sequence is that of Ribosome-binding factor A from Streptococcus agalactiae serotype III (strain NEM316).